The chain runs to 622 residues: MSTDNKQSLPAITLAAIGVVYGDIGTSPLYTLRECLSGQFGFGVERDAVFGFLSLIFWLLIFVVSIKYLTFVMRADNAGEGGILTLMSLAGRNTSARTTSMLVIMGLIGGSFFYGEVVITPAISVMSAIEGLEIVAPQLDTWIVPLSIVVLTLLFMIQKHGTGMVGKLFAPIMLTWFLILAVLGLRSIIANPEVLHALNPVWAVRFFLEYKTVSFIALGAVVLSITGVEALYADMGHFGKFPIRLAWFTVVLPSLVLNYFGQGALLLKHPEAIKNPFFLLAPDWALIPLLILAALATVIASQAVISGVFSLTRQAVRLGYLSPMRIIHTSEMESGQIYIPFVNWLLYFAVVVVIVSFEHSSNLAAAYGIAVTGTMVLTSILSTTVARKNWHWNKYLVALILVAFLCVDIPLFSANLDKLLSGGWLPLSLGLIMFTIMTTWKSERFRLLRRMHEHGNSLEAMIASLEKSPPVRVPGTAVYMSRVLNVIPFALLHNLKHNKVLHERVILLTLRTEDAPYVHNVRRVQIEQLSPTFWRVVASYGWRETPNVEEVFHRCGLEGLSCRMMETSFFMSHESLIVGKRPWYLRLRGKLYLLLQRNALRAPDQFEIPPNRVIELGTQVEI.

12 consecutive transmembrane segments (helical) span residues 9–29, 49–69, 103–123, 137–157, 165–185, 213–233, 247–267, 276–296, 337–357, 363–383, 396–416, and 419–439; these read LPAITLAAIGVVYGDIGTSPL, VFGFLSLIFWLLIFVVSIKYL, VIMGLIGGSFFYGEVVITPAI, PQLDTWIVPLSIVVLTLLFMI, VGKLFAPIMLTWFLILAVLGL, VSFIALGAVVLSITGVEALYA, WFTVVLPSLVLNYFGQGALLL, PFFLLAPDWALIPLLILAALA, IYIPFVNWLLYFAVVVVIVSF, LAAAYGIAVTGTMVLTSILST, LVALILVAFLCVDIPLFSANL, and LLSGGWLPLSLGLIMFTIMTT.

It belongs to the HAK/KUP transporter (TC 2.A.72) family.

The protein resides in the cell inner membrane. It catalyses the reaction K(+)(in) + H(+)(in) = K(+)(out) + H(+)(out). In terms of biological role, responsible for the low-affinity transport of potassium into the cell. Likely operates as a K(+):H(+) symporter. The protein is Low affinity potassium transport system protein Kup of Salmonella arizonae (strain ATCC BAA-731 / CDC346-86 / RSK2980).